A 309-amino-acid chain; its full sequence is uncharacterized protein (309 aa).

The helical transmembrane segment at 23–43 threads the bilayer; sequence ALVLSSIVNILLLLLIYSTVF.

It belongs to the chlamydial CPn_0593/CT_474/TC_0759 family.

It is found in the membrane. This is an uncharacterized protein from Chlamydia trachomatis serovar D (strain ATCC VR-885 / DSM 19411 / UW-3/Cx).